The sequence spans 179 residues: Acireductone dioxygenase (179 aa).

Positions 88, 90, 94, and 133 each coordinate Fe(2+). Residues His88, His90, Glu94, and His133 each coordinate Ni(2+).

The protein belongs to the acireductone dioxygenase (ARD) family. Monomer. Interacts with MMP14. The cofactor is Fe(2+). Requires Ni(2+) as cofactor.

It localises to the cytoplasm. It is found in the nucleus. The protein localises to the cell membrane. It carries out the reaction 1,2-dihydroxy-5-(methylsulfanyl)pent-1-en-3-one + O2 = 4-methylsulfanyl-2-oxobutanoate + formate + 2 H(+). The catalysed reaction is 1,2-dihydroxy-5-(methylsulfanyl)pent-1-en-3-one + O2 = 3-(methylsulfanyl)propanoate + CO + formate + 2 H(+). It participates in amino-acid biosynthesis; L-methionine biosynthesis via salvage pathway; L-methionine from S-methyl-5-thio-alpha-D-ribose 1-phosphate: step 5/6. In terms of biological role, catalyzes 2 different reactions between oxygen and the acireductone 1,2-dihydroxy-3-keto-5-methylthiopentene (DHK-MTPene) depending upon the metal bound in the active site. Fe-containing acireductone dioxygenase (Fe-ARD) produces formate and 2-keto-4-methylthiobutyrate (KMTB), the alpha-ketoacid precursor of methionine in the methionine recycle pathway. Ni-containing acireductone dioxygenase (Ni-ARD) produces methylthiopropionate, carbon monoxide and formate, and does not lie on the methionine recycle pathway. Also down-regulates cell migration mediated by MMP14. This Macaca mulatta (Rhesus macaque) protein is Acireductone dioxygenase.